A 250-amino-acid polypeptide reads, in one-letter code: NADH-quinone oxidoreductase subunit C (250 aa).

This sequence belongs to the complex I 30 kDa subunit family. NDH-1 is composed of 14 different subunits. Subunits NuoB, C, D, E, F, and G constitute the peripheral sector of the complex.

It is found in the cell inner membrane. It catalyses the reaction a quinone + NADH + 5 H(+)(in) = a quinol + NAD(+) + 4 H(+)(out). NDH-1 shuttles electrons from NADH, via FMN and iron-sulfur (Fe-S) centers, to quinones in the respiratory chain. The immediate electron acceptor for the enzyme in this species is believed to be ubiquinone. Couples the redox reaction to proton translocation (for every two electrons transferred, four hydrogen ions are translocated across the cytoplasmic membrane), and thus conserves the redox energy in a proton gradient. This Xylella fastidiosa (strain M23) protein is NADH-quinone oxidoreductase subunit C.